Consider the following 247-residue polypeptide: Large ribosomal subunit protein uL24m (247 aa).

The region spanning 84–117 (FFRGDRIEVLVGKDKGKQGIVTQVIPERNWVIVE) is the KOW domain.

This sequence belongs to the universal ribosomal protein uL24 family. As to quaternary structure, component of the mitochondrial ribosome large subunit (39S) which comprises a 16S rRNA and about 50 distinct proteins.

It localises to the mitochondrion. In Drosophila melanogaster (Fruit fly), this protein is Large ribosomal subunit protein uL24m (mRpL24).